Reading from the N-terminus, the 416-residue chain is Iron/alpha-ketoglutarate-dependent dioxygenase asqJ (416 aa).

A disordered region spans residues 1–53 (MGYPKAFTSSDSEPEPDLSRDLGNPVMGNPGVVSRSSSTVAQHSVRNNPTGPD). Residues 34–50 (SRSSSTVAQHSVRNNPT) show a composition bias toward polar residues. Histidine 242, aspartate 244, and histidine 319 together coordinate Fe cation.

This sequence belongs to the PhyH family. As to quaternary structure, homodimer. Fe cation is required as a cofactor.

The catalysed reaction is (-)-4'-methoxycyclopeptine + 2-oxoglutarate + O2 = (Z)-4'-methoxydehydrocyclopeptine + succinate + CO2 + H2O. It catalyses the reaction (Z)-4'-methoxydehydrocyclopeptine + 2-oxoglutarate + O2 = (-)-4'-methoxycyclopenine + succinate + CO2. It carries out the reaction (-)-cyclopeptine + 2-oxoglutarate + O2 = (Z)-dehydrocyclopeptine + succinate + CO2 + H2O. The enzyme catalyses (Z)-dehydrocyclopeptine + 2-oxoglutarate + O2 = (-)-cyclopenine + succinate + CO2. It functions in the pathway secondary metabolite biosynthesis. It participates in alkaloid biosynthesis. Its pathway is mycotoxin biosynthesis. Its function is as follows. Iron/alpha-ketoglutarate-dependent dioxygenase; part of the gene cluster that mediates the biosynthesis of the aspoquinolone mycotoxins. Within the pathway, the iron/alpha-ketoglutarate-dependent dioxygenase asqJ acts as a (-)-cyclopenine synthase that converts 4'-methoxycyclopeptin into 4'-methoxydehydrocyclopeptin through dehydrogenation to form a double bond between C-alpha and C-beta of the O-methyltyrosine side chain. AsqJ is a very unique dioxygenase which is capable of catalyzing radical-mediated dehydrogenation and epoxidation reactions sequentially on a 6,7-benzo-diazepinedione substrate in the 4'-methoxyviridicatin biosynthetic pathway. AsqJ is also capable of converting cyclopeptin into dehydrocyclopeptin. The first step of the pathway is catalyzed by the nonribosomal peptide synthetase asqK that condenses anthranilic acid and O-methyl-L-tyrosine to produce 4'-methoxycyclopeptin. 4'-methoxycyclopeptin is then converted to 4'-methoxydehydrocyclopeptin by the ketoglutarate-dependent dioxygenase asqJ. AsqJ also converts its first product 4'-methoxydehydrocyclopeptin to 4'-methoxycyclopenin. The following conversion of 4'-methoxycyclopenin into 4'-methoxyviridicatin is catalyzed by the cyclopenase asqI. 4'-methoxyviridicatin is the precursor of quinolone natural products, and is further converted to quinolinone B. The prenyltransferase asqH1 then catalyzes the canonical Friedel-Crafts alkylation of quinolinone B with dimethylallyl cation to yield dimethylallyl quinolone, which is subjected to FAD-dependent dehydrogenation by the FAD-linked oxidoreductase asqF to yield conjugated aryl diene. The delta(3') double bond then serves as the site of the second alkylation with DMAPP catalyzed by the prenyltransferase asqH2 to yield a carbenium ion intermediate, which can be attacked by H(2)O to yield a styrenyl quinolone containing a C3'-hydroxyprenyl chain. The FAD-dependent monooxygenase asqG performs epoxidation of the terminal C7'-C8' olefin. Finally, after dehydratation of the epoxide at C3 by asqC, the quinolone epoxide rearrangement protein asqO catalyzes an enzymatic 3-exo-tet cyclization to yield the cyclopropyl-THF ring system in aspoquinolone. This chain is Iron/alpha-ketoglutarate-dependent dioxygenase asqJ, found in Emericella nidulans (strain FGSC A4 / ATCC 38163 / CBS 112.46 / NRRL 194 / M139) (Aspergillus nidulans).